We begin with the raw amino-acid sequence, 446 residues long: Protein adenylyltransferase FICD (446 aa).

Over 1–18 the chain is Cytoplasmic; sequence MAVTECEWASLGSRIGLR. Residues 19-39 traverse the membrane as a helical; Signal-anchor for type II membrane protein segment; it reads AALVLLSGSLLVVLFPLSGLE. Residues 40 to 446 lie on the Lumenal side of the membrane; that stretch reads HQYRTALNIL…ECKQTITIKT (407 aa). TPR repeat units lie at residues 94 to 127 and 128 to 161; these read AKAA…DPDH and VDAL…SPHN. Positions 218–223 match the Inhibitory (S/T)XXXE(G/N) motif motif; the sequence is TVAIEG. E222 serves as a coordination point for ATP. The N-linked (GlcNAc...) asparagine glycan is linked to N263. In terms of domain architecture, Fido spans 273–408; it reads VTIDNILEIH…VRPFIRFIAK (136 aa). 304-307 lines the ATP pocket; that stretch reads VGHH. Residue H351 is part of the active site. Residues 355-362, 387-388, and N395 each bind ATP; these read DGNGRTSR and YY.

It belongs to the fic family. Homodimer. Requires Mg(2+) as cofactor. The cofactor is Mn(2+).

It is found in the endoplasmic reticulum membrane. It catalyses the reaction L-tyrosyl-[protein] + ATP = O-(5'-adenylyl)-L-tyrosyl-[protein] + diphosphate. The catalysed reaction is 3-O-(5'-adenylyl)-L-threonyl-[protein] + H2O = L-threonyl-[protein] + AMP + H(+). The enzyme catalyses L-threonyl-[protein] + ATP = 3-O-(5'-adenylyl)-L-threonyl-[protein] + diphosphate. Its activity is regulated as follows. The side chain of Glu-222 determines which of the two opposing activities (AMPylase or de-AMPylase) will take place. In response to endoplasmic reticulum stress, mediates de-AMPylase activity. Adenylyltransferase activity is inhibited by the inhibitory helix present at the N-terminus: Glu-222 binds ATP and competes with ATP-binding at Arg-362, thereby preventing adenylyltransferase activity. In unstressed cells, disengagement of Glu-222 promotes adenylyltransferase activity. Activation dissociates ATP-binding from Glu-222, allowing ordered binding of the entire ATP moiety with the alpha-phosphate in an orientation that is productive for accepting an incoming target hydroxyl side chain. In terms of biological role, protein that can both mediate the addition of adenosine 5'-monophosphate (AMP) to specific residues of target proteins (AMPylation), and the removal of the same modification from target proteins (de-AMPylation), depending on the context. The side chain of Glu-222 determines which of the two opposing activities (AMPylase or de-AMPylase) will take place. Acts as a key regulator of the ERN1/IRE1-mediated unfolded protein response (UPR) by mediating AMPylation or de-AMPylation of HSPA5/BiP. In unstressed cells, acts as an adenylyltransferase by mediating AMPylation of HSPA5/BiP at 'Thr-518', thereby inactivating it. In response to endoplasmic reticulum stress, acts as a phosphodiesterase by mediating removal of ATP (de-AMPylation) from HSPA5/BiP at 'Thr-518', leading to restore HSPA5/BiP activity. This is Protein adenylyltransferase FICD from Xenopus tropicalis (Western clawed frog).